We begin with the raw amino-acid sequence, 323 residues long: Cyclin-H (323 aa).

Ser-5 bears the Phosphoserine; by CDK8 mark. A Phosphoserine modification is found at Ser-132. The tract at residues 297-323 (YEDDDYVSKKSKHEEEEWTDDDLVESL) is disordered. The segment covering 302–311 (YVSKKSKHEE) has biased composition (basic and acidic residues). Ser-304 bears the Phosphoserine; by CDK8 mark. Residues 312–323 (EEWTDDDLVESL) are compositionally biased toward acidic residues. Thr-315 carries the post-translational modification Phosphothreonine. Ser-322 bears the Phosphoserine mark.

This sequence belongs to the cyclin family. Cyclin C subfamily. As to quaternary structure, associates primarily with CDK7 and MAT1 to form the CAK complex. CAK can further associate with the core-TFIIH to form the TFIIH basal transcription factor.

It is found in the nucleus. Regulates CDK7, the catalytic subunit of the CDK-activating kinase (CAK) enzymatic complex. CAK activates the cyclin-associated kinases CDK1, CDK2, CDK4 and CDK6 by threonine phosphorylation. CAK complexed to the core-TFIIH basal transcription factor activates RNA polymerase II by serine phosphorylation of the repetitive C-terminal domain (CTD) of its large subunit (POLR2A), allowing its escape from the promoter and elongation of the transcripts. Involved in cell cycle control and in RNA transcription by RNA polymerase II. Its expression and activity are constant throughout the cell cycle. The polypeptide is Cyclin-H (CCNH) (Homo sapiens (Human)).